A 231-amino-acid chain; its full sequence is Acyl-protein thioesterase 2 (231 aa).

A lipid anchor (S-palmitoyl cysteine) is attached at C2. S82 bears the Phosphoserine mark. Active-site charge relay system residues include S122, D176, and H210.

This sequence belongs to the AB hydrolase superfamily. AB hydrolase 2 family. As to expression, ubiquitous; detected at low levels.

Its subcellular location is the cytoplasm. The enzyme catalyses S-hexadecanoyl-L-cysteinyl-[protein] + H2O = L-cysteinyl-[protein] + hexadecanoate + H(+). The catalysed reaction is prostaglandin E2 1-glyceryl ester + H2O = prostaglandin E2 + glycerol + H(+). It carries out the reaction 1-hexadecanoyl-sn-glycero-3-phosphocholine + H2O = sn-glycerol 3-phosphocholine + hexadecanoate + H(+). It catalyses the reaction 1-octadecanoyl-sn-glycero-3-phosphocholine + H2O = octadecanoate + sn-glycerol 3-phosphocholine + H(+). The enzyme catalyses 1-hexadecanoyl-sn-glycero-3-phosphate + H2O = sn-glycerol 3-phosphate + hexadecanoate + H(+). The catalysed reaction is 1-hexadecanoyl-sn-glycero-3-phospho-L-serine + H2O = sn-glycero-3-phospho-L-serine + hexadecanoate + H(+). Functionally, acts as an acyl-protein thioesterase hydrolyzing fatty acids from S-acylated cysteine residues in proteins such as trimeric G alpha proteins, GSDMD, GAP43, ZDHHC6 or HRAS. Deacylates GAP43. Mediates depalmitoylation of ZDHHC6. Has lysophospholipase activity. Hydrolyzes prostaglandin glycerol esters (PG-Gs). Hydrolyzes PG-Gs in the following order prostaglandin D2-glycerol ester (PGD2-G) &gt; prostaglandin E2 glycerol ester (PGE2-G) &gt; prostaglandin F2-alpha-glycerol ester (PGF2-alpha-G). Hydrolyzes 1-arachidonoylglycerol but not 2-arachidonoylglycerol or arachidonoylethanolamide. The chain is Acyl-protein thioesterase 2 (Lypla2) from Mus musculus (Mouse).